The sequence spans 147 residues: Ubiquitin-conjugating enzyme E2 D2 (147 aa).

Residues 1–147 form the UBC core domain; sequence MALKRIHKEL…SREWTQKYAM (147 aa). The Glycyl thioester intermediate role is filled by C85.

The protein belongs to the ubiquitin-conjugating enzyme family. In terms of assembly, interacts with SCF (SKP1-CUL1-F-box protein) E3 ubiquitin ligase complex. Interacts with CNOT4 (via RING domain). Interacts with E3 ubiquitin-protein ligases CBLC, PJA1 and PJA2. Interacts with PDZRN3. Interacts with PPP1R11. Interacts with E3 ubiquitin-protein ligase PHF7; the interaction inhibits cleavage of PHF7 and promotes association of the complex with the nucleosome core particle.

It catalyses the reaction S-ubiquitinyl-[E1 ubiquitin-activating enzyme]-L-cysteine + [E2 ubiquitin-conjugating enzyme]-L-cysteine = [E1 ubiquitin-activating enzyme]-L-cysteine + S-ubiquitinyl-[E2 ubiquitin-conjugating enzyme]-L-cysteine.. The enzyme catalyses S-ubiquitinyl-[E1 ubiquitin-activating enzyme]-L-cysteine + [acceptor protein]-L-lysine = [E1 ubiquitin-activating enzyme]-L-cysteine + N(6)-monoubiquitinyl-[acceptor protein]-L-lysine.. It participates in protein modification; protein ubiquitination. In terms of biological role, accepts ubiquitin from the E1 complex and catalyzes its covalent attachment to other proteins. In vitro catalyzes 'Lys-48'-linked polyubiquitination. Mediates the selective degradation of short-lived and abnormal proteins. Functions in the E6/E6-AP-induced ubiquitination of p53/TP53. Mediates ubiquitination of PEX5 and SQSTM1 and autoubiquitination of STUB1 and TRAF6. Involved in the signal-induced conjugation and subsequent degradation of NFKBIA, FBXW2-mediated GCM1 ubiquitination and degradation, MDM2-dependent degradation of p53/TP53 and the activation of MAVS in the mitochondria by RIGI in response to viral infection. Essential for viral activation of IRF3. This Sus scrofa (Pig) protein is Ubiquitin-conjugating enzyme E2 D2 (UBE2D2).